The chain runs to 205 residues: Phosphoheptose isomerase (205 aa).

Residues 38-200 (LAVRLALGSK…LFEAVGELEP (163 aa)) form the SIS domain. 53-55 (NGG) contributes to the substrate binding site. The Zn(2+) site is built by H62 and E66. Substrate is bound by residues E66, 95–96 (ND), 121–123 (STS), S126, and Q173. The Zn(2+) site is built by Q173 and H181.

This sequence belongs to the SIS family. GmhA subfamily. As to quaternary structure, homotetramer. Requires Zn(2+) as cofactor.

The protein localises to the cytoplasm. It carries out the reaction 2 D-sedoheptulose 7-phosphate = D-glycero-alpha-D-manno-heptose 7-phosphate + D-glycero-beta-D-manno-heptose 7-phosphate. The protein operates within carbohydrate biosynthesis; D-glycero-D-manno-heptose 7-phosphate biosynthesis; D-glycero-alpha-D-manno-heptose 7-phosphate and D-glycero-beta-D-manno-heptose 7-phosphate from sedoheptulose 7-phosphate: step 1/1. In terms of biological role, catalyzes the isomerization of sedoheptulose 7-phosphate in D-glycero-D-manno-heptose 7-phosphate. The polypeptide is Phosphoheptose isomerase (Maridesulfovibrio salexigens (strain ATCC 14822 / DSM 2638 / NCIMB 8403 / VKM B-1763) (Desulfovibrio salexigens)).